The primary structure comprises 283 residues: Phosphatidylserine decarboxylase proenzyme (283 aa).

Active-site charge relay system; for autoendoproteolytic cleavage activity residues include aspartate 90, histidine 143, and serine 248. The active-site Schiff-base intermediate with substrate; via pyruvic acid; for decarboxylase activity is serine 248. The residue at position 248 (serine 248) is a Pyruvic acid (Ser); by autocatalysis.

Belongs to the phosphatidylserine decarboxylase family. PSD-B subfamily. Prokaryotic type I sub-subfamily. Heterodimer of a large membrane-associated beta subunit and a small pyruvoyl-containing alpha subunit. Pyruvate is required as a cofactor. In terms of processing, is synthesized initially as an inactive proenzyme. Formation of the active enzyme involves a self-maturation process in which the active site pyruvoyl group is generated from an internal serine residue via an autocatalytic post-translational modification. Two non-identical subunits are generated from the proenzyme in this reaction, and the pyruvate is formed at the N-terminus of the alpha chain, which is derived from the carboxyl end of the proenzyme. The autoendoproteolytic cleavage occurs by a canonical serine protease mechanism, in which the side chain hydroxyl group of the serine supplies its oxygen atom to form the C-terminus of the beta chain, while the remainder of the serine residue undergoes an oxidative deamination to produce ammonia and the pyruvoyl prosthetic group on the alpha chain. During this reaction, the Ser that is part of the protease active site of the proenzyme becomes the pyruvoyl prosthetic group, which constitutes an essential element of the active site of the mature decarboxylase.

It is found in the cell membrane. It catalyses the reaction a 1,2-diacyl-sn-glycero-3-phospho-L-serine + H(+) = a 1,2-diacyl-sn-glycero-3-phosphoethanolamine + CO2. It participates in phospholipid metabolism; phosphatidylethanolamine biosynthesis; phosphatidylethanolamine from CDP-diacylglycerol: step 2/2. Functionally, catalyzes the formation of phosphatidylethanolamine (PtdEtn) from phosphatidylserine (PtdSer). The sequence is that of Phosphatidylserine decarboxylase proenzyme from Francisella tularensis subsp. novicida (strain U112).